We begin with the raw amino-acid sequence, 530 residues long: UDP-glucuronosyltransferase 1A7 (530 aa).

Positions 1–25 (MARAGWTGLLPLYVCLLLTCGFAKA) are cleaved as a signal peptide. Asparagine 71, asparagine 292, and asparagine 344 each carry an N-linked (GlcNAc...) asparagine glycan. The chain crosses the membrane as a helical span at residues 488 to 504 (VIGFLLAVVLTVAFITF).

Belongs to the UDP-glycosyltransferase family. Homodimer. Homooligomer. Interacts with UGT1A1, UGT1A3, UGT1A4, UGT1A6, UGT1A8, UGT1A9 and UGT1A10 to form heterodimers. Isoform 1 interacts with isoform 2/i2 suggesting that oligomerization is involved in negative regulation of transferase activity by isoform 2. Isoform 1 also interacts with respective i2 isoforms of UGT1A1, UGT1A3, UGT1A4, UGT1A6, UGT1A8, UGT1A9 and UGT1A10. Liver and gastric tissue. Isoform 1 and isoform 2 are expressed in esophagus. Neither isoform is expressed in liver, kidney, colon and small intestine.

The protein resides in the endoplasmic reticulum membrane. It carries out the reaction glucuronate acceptor + UDP-alpha-D-glucuronate = acceptor beta-D-glucuronoside + UDP + H(+). It catalyses the reaction 17alpha-estradiol + UDP-alpha-D-glucuronate = 17alpha-estradiol 3-O-(beta-D-glucuronate) + UDP + H(+). The catalysed reaction is prunetin + UDP-alpha-D-glucuronate = prunetin-5-O-beta-D-glucuronide + UDP. The enzyme catalyses 5-epi-5-F2t-IsoP + UDP-alpha-D-glucuronate = 5-epi-5-F2t-IsoP-glucuronide + UDP + H(+). It carries out the reaction (E)-ferulate + UDP-alpha-D-glucuronate = (E)-ferulic acid beta-D-glucuronate ester + UDP. It catalyses the reaction candesartan + UDP-alpha-D-glucuronate = candesartan O-beta-D-glucuronoside + UDP. The catalysed reaction is SN-38 + UDP-alpha-D-glucuronate = SN-38 O-beta-D-glucuronide + UDP + H(+). The enzyme catalyses mycophenolate + UDP-alpha-D-glucuronate = mycophenolate 7-O-beta-D-glucuronide + UDP + H(+). UDP-glucuronosyltransferase (UGT) that catalyzes phase II biotransformation reactions in which lipophilic substrates are conjugated with glucuronic acid to increase the metabolite's water solubility, thereby facilitating excretion into either the urine or bile. Essential for the elimination and detoxification of drugs, xenobiotics and endogenous compounds. Catalyzes the glucuronidation of endogenous estrogen hormone epiestradiol. Involved in the glucuronidation of F2-isoprostane (5-epi-5-F2t-IsoP). Involved in the glucuronidation of the phytochemical ferulic acid at the carboxylic acid group. Also catalyzes the glucuronidation of the isoflavones genistein, daidzein, glycitein, formononetin, biochanin A and prunetin, which are phytoestrogens with anticancer and cardiovascular properties. Involved in the glucuronidation of the AGTR1 angiotensin receptor antagonist caderastan, a drug which can inhibit the effect of angiotensin II. Involved in the biotransformation of 7-ethyl-10-hydroxycamptothecin (SN-38), the pharmacologically active metabolite of the anticancer drug irinotecan. Also metabolizes mycophenolate, an immunosuppressive agent. In terms of biological role, lacks UGT glucuronidation activity but acts as a negative regulator of isoform 1. This Homo sapiens (Human) protein is UDP-glucuronosyltransferase 1A7.